The chain runs to 472 residues: Aspartyl/glutamyl-tRNA(Asn/Gln) amidotransferase subunit B (472 aa).

Belongs to the GatB/GatE family. GatB subfamily. As to quaternary structure, heterotrimer of A, B and C subunits.

The catalysed reaction is L-glutamyl-tRNA(Gln) + L-glutamine + ATP + H2O = L-glutaminyl-tRNA(Gln) + L-glutamate + ADP + phosphate + H(+). The enzyme catalyses L-aspartyl-tRNA(Asn) + L-glutamine + ATP + H2O = L-asparaginyl-tRNA(Asn) + L-glutamate + ADP + phosphate + 2 H(+). Allows the formation of correctly charged Asn-tRNA(Asn) or Gln-tRNA(Gln) through the transamidation of misacylated Asp-tRNA(Asn) or Glu-tRNA(Gln) in organisms which lack either or both of asparaginyl-tRNA or glutaminyl-tRNA synthetases. The reaction takes place in the presence of glutamine and ATP through an activated phospho-Asp-tRNA(Asn) or phospho-Glu-tRNA(Gln). The chain is Aspartyl/glutamyl-tRNA(Asn/Gln) amidotransferase subunit B from Campylobacter jejuni (strain RM1221).